Consider the following 624-residue polypeptide: MSDNQSWNSSGSEEDPETESGPPVERCGVLSKWTNYIHGWQDRWVVLKNNALSYYKSEDETEYGCRGSICLSKAVITPHDFDECRFDISVNDSVWYLRAQDPDHRQQWIDAIEQHKTESGYGSESSLRRHGSMVSLVSGASGYSATSTSSFKKGHSLREKLAEMETFRDILCRQVDTLQKYFDACADAVSKDELQRDKVVEDDEDDFPTTRSDGDFLHSTNGNKEKLFPHVTPKGINGIDFKGEAITFKATTAGILATLSHCIELMVKREDSWQKRLDKETEKKRRTEEAYKNAMTELKKKSHFGGPDYEEGPNSLINEEEFFDAVEAALDRQDKIEEQSQSEKVRLHWPTSLPSGDAFSSVGTHRFVQKPYSRSSSMSSIDLVSASDDVHRFSSQVEEMVQNHMTYSLQDVGGDANWQLVVEEGEMKVYRREVEENGIVLDPLKATHAVKGVTGHEVCNYFWNVDVRNDWETTIENFHVVETLADNAIIIYQTHKRVWPASQRDVLYLSVIRKIPALTENDPETWIVCNFSVDHDSAPLNNRCVRAKINVAMICQTLVSPPEGNQEISRDNILCKITYVANVNPGGWAPASVLRAVAKREYPKFLKRFTSYVQEKTAGKPILF.

Over residues methionine 1–glycine 11 the composition is skewed to polar residues. Positions methionine 1 to valine 24 are disordered. The PH domain maps to proline 23–threonine 117. Serine 126 carries the post-translational modification Phosphoserine. A Phosphoserine; by PKD modification is found at serine 132. Serine 135 carries the phosphoserine modification. A coiled-coil region spans residues isoleucine 263 to histidine 303. Serine 315 bears the Phosphoserine mark. The short motif at glutamate 321–glutamate 327 is the FFAT element. Position 372 is a phosphotyrosine (tyrosine 372). Phosphoserine is present on residues serine 373, serine 377, and serine 380. The region spanning aspartate 389–alanine 618 is the START domain. Glutamate 472, glutamine 493, asparagine 530, and tyrosine 579 together coordinate an N-acylsphing-4-enine.

Interacts with VAPA and VAPB. Interaction with VAPB is less efficient than with VAPA. Interacts (via FFAT motif) with MOSPD2 (via MSP domain). Post-translationally, phosphorylation on Ser-132 decreases the affinity toward phosphatidylinositol 4-phosphate at Golgi membranes and reduces ceramide transfer activity. Inactivated by hyperphosphorylation of serine residues by CSNK1G2/CK1 that triggers dissociation from the Golgi complex, thus down-regulating ER-to-Golgi transport of ceramide and sphingomyelin synthesis. Widely expressed.

The protein resides in the cytoplasm. It localises to the golgi apparatus. The protein localises to the endoplasmic reticulum. The catalysed reaction is N-hexadecanoylsphing-4-enine(in) = N-hexadecanoylsphing-4-enine(out). Its function is as follows. Shelters ceramides and diacylglycerol lipids inside its START domain and mediates the intracellular trafficking of ceramides and diacylglycerol lipids in a non-vesicular manner. The chain is Ceramide transfer protein from Homo sapiens (Human).